Here is a 416-residue protein sequence, read N- to C-terminus: Glutamyl-tRNA reductase (416 aa).

Substrate-binding positions include 50–53 (TCNR), S109, 114–116 (EPQ), and Q120. Residue C51 is the Nucleophile of the active site. Position 189 to 194 (189 to 194 (GAGEMI)) interacts with NADP(+).

This sequence belongs to the glutamyl-tRNA reductase family. In terms of assembly, homodimer.

The catalysed reaction is (S)-4-amino-5-oxopentanoate + tRNA(Glu) + NADP(+) = L-glutamyl-tRNA(Glu) + NADPH + H(+). Its pathway is porphyrin-containing compound metabolism; protoporphyrin-IX biosynthesis; 5-aminolevulinate from L-glutamyl-tRNA(Glu): step 1/2. Functionally, catalyzes the NADPH-dependent reduction of glutamyl-tRNA(Glu) to glutamate 1-semialdehyde (GSA). This chain is Glutamyl-tRNA reductase, found in Ruthia magnifica subsp. Calyptogena magnifica.